The primary structure comprises 838 residues: Spindle pole body component 110 (838 aa).

Disordered stretches follow at residues 1–67 (MSDS…ADDT), 187–209 (SEHK…MRSL), and 287–310 (LQKA…KEIE). Coiled coils occupy residues 163–644 (LQEW…GKRE) and 682–709 (SEKY…LERA). The span at 287-303 (LQKANHDSSSLADQKLQ) shows a compositional bias: polar residues.

It belongs to the SPC110 family. As to quaternary structure, homodimer.

The protein localises to the nucleus. The protein resides in the cytoplasm. Its subcellular location is the cytoskeleton. It localises to the microtubule organizing center. It is found in the spindle pole body. In terms of biological role, component of the spindle pole body (SPB) required for the proper execution of spindle pole body (SPB) duplication. Potential role in cross-linking filaments or anchoring other molecules. It is essential for growth. This is Spindle pole body component 110 (SPC110) from Lachancea thermotolerans (strain ATCC 56472 / CBS 6340 / NRRL Y-8284) (Yeast).